Consider the following 118-residue polypeptide: Small ribosomal subunit protein uS13 (118 aa).

The segment at 94 to 118 (GLPVRGQRTKTNARTRKGPRKPIKK) is disordered.

This sequence belongs to the universal ribosomal protein uS13 family. In terms of assembly, part of the 30S ribosomal subunit. Forms a loose heterodimer with protein S19. Forms two bridges to the 50S subunit in the 70S ribosome.

Located at the top of the head of the 30S subunit, it contacts several helices of the 16S rRNA. In the 70S ribosome it contacts the 23S rRNA (bridge B1a) and protein L5 of the 50S subunit (bridge B1b), connecting the 2 subunits; these bridges are implicated in subunit movement. Contacts the tRNAs in the A and P-sites. The sequence is that of Small ribosomal subunit protein uS13 from Erwinia tasmaniensis (strain DSM 17950 / CFBP 7177 / CIP 109463 / NCPPB 4357 / Et1/99).